We begin with the raw amino-acid sequence, 55 residues long: Large ribosomal subunit protein bL33 (55 aa).

It belongs to the bacterial ribosomal protein bL33 family.

This is Large ribosomal subunit protein bL33 from Caulobacter sp. (strain K31).